The following is a 670-amino-acid chain: MTSERKMLVTSALPYANGHLHLGHLVEHIQTDIWVRTHKMLGIQCISVCGDDAHGTPIMLKAEQLGITPEALTAEIKLSHEKDFKAFAIDYDYYHTTHSPENQALATTIFERLQAGGDIVKKTIRQFYDPVKQMFLPDRYVKGTCPKCAAVDQYGDNCEVCGATYSPTDLINPVSVISGASPVEMESEHYFFDLPRYEELLKDWTRKGHLQTEVTNKLSEWFEAGLKQWDISRDAPYFGFPIPGVPDKYFYVWLDAPIGYMASFKKYCDERGVSFDEFWDKASKTELYHFVGKDIVYFHALFWPAMLAASGFRTPTAVYTHGFLTVEGQKMSKSRGTFIEARAYLAHLHPEYLRYYFAAKLNGRVDDLDLNFDDFVNRVNADLVGKVVNIASRCAGFINKRFDNRLSSELINQKLYNDLLSAREFVIDAFVSRDYARAIRQIMDCADKVNQYIDANKPWVLAKDESKLNEVHAICTMGINLFRILITYLKPVLPMMAKASEEFLNSEPLHWGSIDKPLLNHRINTFKPLMVRVEKEKIEAMLVQSKESLMTTPIKENTPVEDSNLISIEDFAKVDLRIAKIVNAEPVEGADKLMRLILDLGDAQKQVFAGIKKAYDAEELIGRLTVMVANLEPRTMRFGVSEGMVLAAGDGQGIYLLQPDAGAFPGMKVK.

The 'HIGH' region signature appears at 14–24; that stretch reads PYANGHLHLGH. Positions 145, 148, 158, and 161 each coordinate Zn(2+). A 'KMSKS' region motif is present at residues 330–334; sequence KMSKS. Lys333 lines the ATP pocket. One can recognise a tRNA-binding domain in the interval 570 to 670; the sequence is DFAKVDLRIA…AGAFPGMKVK (101 aa).

Belongs to the class-I aminoacyl-tRNA synthetase family. MetG type 1 subfamily. In terms of assembly, homodimer. Zn(2+) serves as cofactor.

The protein resides in the cytoplasm. It catalyses the reaction tRNA(Met) + L-methionine + ATP = L-methionyl-tRNA(Met) + AMP + diphosphate. Its function is as follows. Is required not only for elongation of protein synthesis but also for the initiation of all mRNA translation through initiator tRNA(fMet) aminoacylation. The chain is Methionine--tRNA ligase from Legionella pneumophila (strain Corby).